The chain runs to 75 residues: UPF0352 protein YejL (75 aa).

This sequence belongs to the UPF0352 family.

This Shigella flexneri protein is UPF0352 protein YejL.